We begin with the raw amino-acid sequence, 160 residues long: Protein max (160 aa).

Residues 1-13 (MSDNDDIEVESDE) are compositionally biased toward acidic residues. Positions 1–40 (MSDNDDIEVESDEEQPRFQSAADKRAHHNALERKRRDHIK) are disordered. Ser2 is modified (N-acetylserine). Ser2 and Ser11 each carry phosphoserine. Residues 23–74 (DKRAHHNALERKRRDHIKDSFHSLRDSVPSLQGEKASRAQILDKATEYIQYM) enclose the bHLH domain. Residues 29–40 (NALERKRRDHIK) show a composition bias toward basic and acidic residues. Lys66 is subject to N6-acetyllysine. The leucine-zipper stretch occupies residues 81 to 102 (HQQDIDDLKRQNALLEQQVRAL). The tract at residues 103–160 (EKARSSAQLQTNYPSSDNSLYTNAKGSTISAFDGGSDSSSESEPEEPQSRKKLRMEAS) is disordered. Phosphoserine is present on Ser107. Positions 107–132 (SSAQLQTNYPSSDNSLYTNAKGSTIS) are enriched in polar residues. A Nuclear localization signal motif is present at residues 152–156 (RKKLR). An N6-acetyllysine mark is found at Lys153 and Lys154.

The protein belongs to the MAX family. Efficient DNA binding requires dimerization with another bHLH protein. Binds DNA as a heterodimer with MYC or MAD. Part of the E2F6.com-1 complex in G0 phase composed of E2F6, MGA, MAX, TFDP1, CBX3, BAT8, EUHMTASE1, RING1, RNF2, MBLR, L3MBTL2 and YAF2. Component of some MLL1/MLL complex, at least composed of the core components KMT2A/MLL1, ASH2L, HCFC1/HCF1, WDR5 and RBBP5, as well as the facultative components BACC1, CHD8, E2F6, HSP70, INO80C, KANSL1, LAS1L, MAX, MCRS1, MGA, MYST1/MOF, PELP1, PHF20, PRP31, RING2, RUVB1/TIP49A, RUVB2/TIP49B, SENP3, TAF1, TAF4, TAF6, TAF7, TAF9 and TEX10. Interacts with SPAG9. The heterodimer MYC:MAX interacts with ABI1; the interaction may enhance MYC:MAX transcriptional activity. Post-translationally, reversible lysine acetylation might regulate the nuclear-cytoplasmic shuttling of specific Max complexes. In terms of tissue distribution, high levels found in the brain, heart and lung while lower levels are seen in the liver, kidney and skeletal muscle.

It localises to the nucleus. It is found in the cell projection. The protein localises to the dendrite. Its function is as follows. Transcription regulator. Forms a sequence-specific DNA-binding protein complex with MYC or MAD which recognizes the core sequence 5'-CAC[GA]TG-3'. The MYC:MAX complex is a transcriptional activator, whereas the MAD:MAX complex is a repressor. May repress transcription via the recruitment of a chromatin remodeling complex containing H3 'Lys-9' histone methyltransferase activity. Represses MYC transcriptional activity from E-box elements. The sequence is that of Protein max from Homo sapiens (Human).